The following is a 735-amino-acid chain: Protostadienol synthase A (735 aa).

One copy of the PFTB 1 repeat lies at 129-170; sequence KNEMIRYLLNFVNEDGGWGLWINSPSTVFGTTMNYTMLRILG. The Proton donor role is filled by Asp-460. PFTB repeat units lie at residues 487–528, 564–604, and 613–660; these read LAEA…YDNV, MARC…ETVG, and CRNA…ALMG.

The protein belongs to the terpene cyclase/mutase family.

The enzyme catalyses (S)-2,3-epoxysqualene = (17Z)-protosta-17(20),24-dien-3beta-ol. In terms of biological role, protostadienol synthase which cyclizes (3S)-oxidosqualene to (17Z)-protosta-17(20),24-dien-3-beta-ol (protostadienol), the biosynthetic precursor of helvolic acid, a secondary metabolite which promotes virulence. In Arthroderma gypseum (strain ATCC MYA-4604 / CBS 118893) (Microsporum gypseum), this protein is Protostadienol synthase A (PDSA).